The sequence spans 423 residues: N-acylneuraminate cytidylyltransferase B (423 aa).

Substrate-binding residues include R30, N40, R88, S97, S99, and Q120. The active site involves R178.

It belongs to the CMP-NeuNAc synthase family. Homotetramer.

The protein localises to the cytoplasm. It catalyses the reaction an N-acylneuraminate + CTP = a CMP-N-acyl-beta-neuraminate + diphosphate. It functions in the pathway amino-sugar metabolism; N-acetylneuraminate metabolism. In terms of biological role, catalyzes the activation of 2-keto-3-deoxy-D-glycero-D-galacto-nononic acid (KDN) to cytidine 5'-monophosphate 2-keto-3-deoxy-D-glycero-D-galacto-nononic acid (CMP-KDN), a substrate required for the addition of sialic acid. Also has weak activity towards N-acetylneuraminic acid (NeuNAc) and N-glycolylneuraminic acid (Neu5Gc). This Danio rerio (Zebrafish) protein is N-acylneuraminate cytidylyltransferase B.